The primary structure comprises 661 residues: MALPPEKATELKQIIHEQLTRMDVHGKIREVLAESLREEFRTESQQLSEEDLMKALRQRGIVDEVMKELHFMEDRNTRELTSTPKPATHFIDKEPRTLKKTNVDPTRRYLHLQVLSGKAFLEHLQESDPLPGQACSTFTLCLHFRNQRFRSKPVPCACEPDFQDGFLLEVHKDSLGDGSRMADATTMLSICDPVQLVLLKTDTSGETSLVSSHFLEWRSVLGTEKGATSLVVELLGVGAECKVSVGILNVKLELYPLLNKTLSQEVINTQFTLERQKTAEKERLFLVYAKQWWREYLQIRPSHNSRLVKIFAQDENWVNRPVCSYIRPLRAGRLLDTPRQAARFVNVLGYERAPTVGGGGKQEQWCTLLAFLCRNKGDCEDHCNLLCSLLLGFGLDAYVCVGTKGRGQAHTWVMTCGTDGAITFWESLTGHRYVHKPINPDDPPMVEQPKPLYPYKTIGCVFNHKRFLANSQPLDAVEVCVFDLHDESRWKPMSEEAIKSVCSPGSIASLPPFPPLCGSLLDAATESNEIELQLRVLVLEHRKDLGLTTVWDDQLSYLLSPALASYEIERTTGISAGNEEFQDCIRRAVPDGHTFKGFPIHFVHRNARRAFATCLRSPFCDEIISCRGDQMRLAVRVRVYTYPEAACAVWIMFACKYRSVL.

The protein belongs to the CEP76 family.

The protein resides in the cytoplasm. Its subcellular location is the cytoskeleton. The protein localises to the microtubule organizing center. It localises to the centrosome. It is found in the centriole. In terms of biological role, centrosomal protein involved in regulation of centriole duplication. Required to limit centriole duplication to once per cell cycle by preventing centriole reduplication. The sequence is that of Centrosomal protein of 76 kDa (cep76) from Xenopus tropicalis (Western clawed frog).